A 372-amino-acid chain; its full sequence is uncharacterized protein (372 aa).

This is an uncharacterized protein from Mycobacterium tuberculosis (strain CDC 1551 / Oshkosh).